The chain runs to 103 residues: Large ribosomal subunit protein uL24 (103 aa).

This sequence belongs to the universal ribosomal protein uL24 family. In terms of assembly, part of the 50S ribosomal subunit.

In terms of biological role, one of two assembly initiator proteins, it binds directly to the 5'-end of the 23S rRNA, where it nucleates assembly of the 50S subunit. Functionally, one of the proteins that surrounds the polypeptide exit tunnel on the outside of the subunit. This is Large ribosomal subunit protein uL24 from Haemophilus ducreyi (strain 35000HP / ATCC 700724).